A 759-amino-acid chain; its full sequence is MIEERGSSRGSREDRGSSRGSSRGSFEDKGSSHDWKGMGGSTPRPRLTRLVAKKDRNYDAKVDSDFDDDSSVHSTSSPRLSPASSDNLSKITIGQQSFRVGGDVDNLKALYEALGATSPAALGIEASDWESRRKSAVYSRPTSPPRVSHDTGQSSYSHDFQFPASRVDSSLESPPLSPRGLAPMSPVRPIEVEWRKHRNNYAKPTISNRPGRENNPLKPSQPPPTMFPQSSGLRTPDPLPPIDTSTSRLGRESLELQNRHTTLGAYSPPGLRKVHSELTGLVSARSDGAGWASDIESAKRNEDLAVASPVFRDNLPSAAVAMPNGSLVRASFTPRDSNRMNSVRSNSHGLRWNSCHAQEAEAIAKTALEETSNGLRIEDPERIRDLEKPSPLIIEKVDEPLSEVSSSVSTESSPSVIPKRPPWDTWAKGEFLGSGTFGSVYEGVARNGTFFAVKEVNLADEGKLGRQAVKQLEREIALLSDIQHPNIVQYLGTERTEDKLYIFLELLNKGSLANLYRKYGLFYEQIKAYTEQILTGLKYLHDRKIIHRDIKCANILVDTNGVVKLADFGMAKQVEKFGFAKSFVGSAHWMAPEVVDPKQQYNFAADIWSLGCTVLEMATEGPPFGELEFIAVFWKIGRGEAPLIPDDLEDELKDFIAQCLQVDASKRPTCDMLLAHPFITGEEMTGPVTQMGTPGLSTISEERSVDMSVTSSIAVSSNSGTSPRVIENLVNHLSIERRPKSMRTLRSELSMSSAESIAS.

Composition is skewed to basic and acidic residues over residues 1–17 (MIEE…DRGS), 25–36 (SFEDKGSSHDWK), and 52–64 (AKKD…KVDS). Disordered regions lie at residues 1–90 (MIEE…NLSK), 122–160 (LGIE…SHDF), 165–184 (SRVD…LAPM), and 195–239 (RKHR…PDPL). The span at 72–85 (VHSTSSPRLSPASS) shows a compositional bias: low complexity. The Protein kinase domain occupies 426 to 679 (WAKGEFLGSG…CDMLLAHPFI (254 aa)). ATP contacts are provided by residues 432-440 (LGSGTFGSV) and lysine 454. The active-site Proton acceptor is aspartate 549.

It belongs to the protein kinase superfamily. STE Ser/Thr protein kinase family. MAP kinase kinase kinase subfamily.

The protein resides in the cell membrane. It catalyses the reaction L-seryl-[protein] + ATP = O-phospho-L-seryl-[protein] + ADP + H(+). It carries out the reaction L-threonyl-[protein] + ATP = O-phospho-L-threonyl-[protein] + ADP + H(+). Its function is as follows. The CERK1, MEKK1a/b, MKK1a/b/c and MPK4a/b proteins are involved in pathogen defense. The pathway induces rapid growth inhibition, cell wall depositions and accumulation of defense-related transcripts. This protein is required for responses to chitin and acts redundantly with MEKK1b. This is Mitogen-activated protein kinase kinase kinase 1a from Physcomitrium patens (Spreading-leaved earth moss).